The chain runs to 96 residues: UPF0235 protein Shewmr4_1190 (96 aa).

The protein belongs to the UPF0235 family.

The polypeptide is UPF0235 protein Shewmr4_1190 (Shewanella sp. (strain MR-4)).